We begin with the raw amino-acid sequence, 298 residues long: Ethanolamine ammonia-lyase small subunit (298 aa).

The disordered stretch occupies residues 17–37 (MGQDVPQPVAPSKQEGAKPQC). Adenosylcob(III)alamin-binding residues include Val210, Glu231, and Cys261.

It belongs to the EutC family. In terms of assembly, the basic unit is a heterodimer which dimerizes to form tetramers. The heterotetramers trimerize; 6 large subunits form a core ring with 6 small subunits projecting outwards. It depends on adenosylcob(III)alamin as a cofactor.

The protein localises to the bacterial microcompartment. The catalysed reaction is ethanolamine = acetaldehyde + NH4(+). It participates in amine and polyamine degradation; ethanolamine degradation. Catalyzes the deamination of various vicinal amino-alcohols to oxo compounds. Allows this organism to utilize ethanolamine as the sole source of nitrogen and carbon in the presence of external vitamin B12. This is Ethanolamine ammonia-lyase small subunit from Salmonella paratyphi A (strain ATCC 9150 / SARB42).